The following is a 244-amino-acid chain: tRNA pseudouridine synthase A (244 aa).

Residue Asp52 is the Nucleophile of the active site. Tyr110 lines the substrate pocket.

The protein belongs to the tRNA pseudouridine synthase TruA family. In terms of assembly, homodimer.

It carries out the reaction uridine(38/39/40) in tRNA = pseudouridine(38/39/40) in tRNA. Its function is as follows. Formation of pseudouridine at positions 38, 39 and 40 in the anticodon stem and loop of transfer RNAs. The chain is tRNA pseudouridine synthase A from Geotalea uraniireducens (strain Rf4) (Geobacter uraniireducens).